The primary structure comprises 350 residues: E3 ubiquitin-protein ligase TRIM63 (350 aa).

The RING-type zinc-finger motif lies at 23 to 79 (CPICLEMFTKPVVILPCQHNLCRKCANDIFQAANPYWTNRGGSVSMSGGRFRCPSCR). Residues 74 to 218 (RCPSCRHEVI…LSQKFDTLYA (145 aa)) are interaction with TTN. A B box-type zinc finger spans residues 117-159 (GSHPMCKEHEDEKINIYCLTCEVPTCSLCKVFGAHQACEVAPL). Residues Cys-122, His-125, Cys-145, and His-151 each contribute to the Zn(2+) site. Positions 207–269 (EELSQKFDTL…VETAIQSLDE (63 aa)) form a coiled coil. The region spanning 267–325 (LDEPGGATFLSSAKQLIKSNVEASKGCQLGKTEQGFENMDYFTLDLEHIAEALRAIDFG) is the COS domain. Acidic residues predominate over residues 325-344 (GTDEEEEEFTEEEADEEEGV). The interval 325–350 (GTDEEEEEFTEEEADEEEGVTTEGHQ) is disordered.

As to quaternary structure, homodimer. Homooligomer and heterooligomer. Interacts with SUMO2, titin/TTN and GMEB1. Interacts with TRIM54 and probably with TRIM55. Interacts with TNNI3. Forms a ternary complex with RACK1 and PRKCE. Interacts with CKM.

The protein localises to the cytoplasm. It localises to the nucleus. The protein resides in the myofibril. It is found in the sarcomere. Its subcellular location is the m line. The protein localises to the z line. It carries out the reaction S-ubiquitinyl-[E2 ubiquitin-conjugating enzyme]-L-cysteine + [acceptor protein]-L-lysine = [E2 ubiquitin-conjugating enzyme]-L-cysteine + N(6)-ubiquitinyl-[acceptor protein]-L-lysine.. The protein operates within protein modification; protein ubiquitination. In terms of biological role, E3 ubiquitin ligase. Mediates the ubiquitination and subsequent proteasomal degradation of CKM, GMEB1 and HIBADH. Regulates the proteasomal degradation of muscle proteins under amino acid starvation, where muscle protein is catabolized to provide other organs with amino acids. Inhibits de novo skeletal muscle protein synthesis under amino acid starvation. Regulates proteasomal degradation of cardiac troponin I/TNNI3 and probably of other sarcomeric-associated proteins. May play a role in striated muscle atrophy and hypertrophy by regulating an anti-hypertrophic PKC-mediated signaling pathway. May regulate the organization of myofibrils through TTN in muscle cells. The sequence is that of E3 ubiquitin-protein ligase TRIM63 (Trim63) from Mus musculus (Mouse).